A 265-amino-acid polypeptide reads, in one-letter code: 4-hydroxy-tetrahydrodipicolinate reductase (265 aa).

NAD(+) contacts are provided by residues 7–12 and Asp-33; that span reads GASGRM. An NADP(+)-binding site is contributed by Arg-34. NAD(+)-binding positions include 96-98 and 120-123; these read GTT and AANM. His-153 functions as the Proton donor/acceptor in the catalytic mechanism. A (S)-2,3,4,5-tetrahydrodipicolinate-binding site is contributed by His-154. The active-site Proton donor is the Lys-157. 163 to 164 lines the (S)-2,3,4,5-tetrahydrodipicolinate pocket; it reads GT.

The protein belongs to the DapB family.

The protein localises to the cytoplasm. It carries out the reaction (S)-2,3,4,5-tetrahydrodipicolinate + NAD(+) + H2O = (2S,4S)-4-hydroxy-2,3,4,5-tetrahydrodipicolinate + NADH + H(+). It catalyses the reaction (S)-2,3,4,5-tetrahydrodipicolinate + NADP(+) + H2O = (2S,4S)-4-hydroxy-2,3,4,5-tetrahydrodipicolinate + NADPH + H(+). Its pathway is amino-acid biosynthesis; L-lysine biosynthesis via DAP pathway; (S)-tetrahydrodipicolinate from L-aspartate: step 4/4. Functionally, catalyzes the conversion of 4-hydroxy-tetrahydrodipicolinate (HTPA) to tetrahydrodipicolinate. The polypeptide is 4-hydroxy-tetrahydrodipicolinate reductase (Burkholderia vietnamiensis (strain G4 / LMG 22486) (Burkholderia cepacia (strain R1808))).